The primary structure comprises 177 residues: FMRFamide-related peptides (177 aa).

The signal sequence occupies residues 1–21 (MNHPRSIAMLAALWLVVSVTS). Residues 22–32 (TPVRRSPDLEA) constitute a propeptide that is removed on maturation. F45 bears the Phenylalanine amide mark. The propeptide occupies 47 to 93 (RSTLPVVPPAQPSFLQRYSAPQPAALTADDLMTFLRAYEEDYSSPVS). Residues F102 and F111 each carry the phenylalanine amide modification. A propeptide spanning residues 113–131 (RSVDEENSGYQAETNTYPQ) is cleaved from the precursor. Position 143 is a leucine amide (L143). Positions 145 to 177 (RDNELSESNDEDRYEVESERTKRSVVDPCNDCA) are excised as a propeptide. The interval 145–177 (RDNELSESNDEDRYEVESERTKRSVVDPCNDCA) is disordered. A compositionally biased stretch (acidic residues) spans 149-158 (LSESNDEDRY). Over residues 159-169 (EVESERTKRSV) the composition is skewed to basic and acidic residues.

This sequence belongs to the FARP (FMRFamide related peptide) family. In terms of tissue distribution, only expressed in the CNS and predominantly in the thoracic ganglia. Strongest expression is seen in two pairs of large neurons in each thoracic ganglion. These neurons are ventrolateral neurosecretory cells 1 and 2, they project their axons through transverse nerves into the periphery where axons from the prothoracic ganglion innervate the prothoracic gland.

It localises to the secreted. Functionally, regulates ecdysteroidogenesis by direct innervation of the prothoracic gland by reducing cAMP production via the receptor for myosuppressin. The neurons that innervate the prothoracic gland during the fifth instar are most active during days 0-4, after which they reduce and then peak again on day 6. Expression suppresses the biosynthesis of steroid hormones called ecdysteroids that elicit molting and metamorphosis. The polypeptide is FMRFamide-related peptides (Bombyx mori (Silk moth)).